The following is a 237-amino-acid chain: D-aminoacyl-tRNA deacylase (237 aa).

This sequence belongs to the DtdA deacylase family. As to quaternary structure, monomer. The cofactor is Zn(2+).

The enzyme catalyses a D-aminoacyl-tRNA + H2O = a tRNA + a D-alpha-amino acid + H(+). It catalyses the reaction glycyl-tRNA(Ala) + H2O = tRNA(Ala) + glycine + H(+). D-aminoacyl-tRNA deacylase with broad substrate specificity. By recycling D-aminoacyl-tRNA to D-amino acids and free tRNA molecules, this enzyme counteracts the toxicity associated with the formation of D-aminoacyl-tRNA entities in vivo. This chain is D-aminoacyl-tRNA deacylase, found in Saccharolobus islandicus (strain Y.N.15.51 / Yellowstone #2) (Sulfolobus islandicus).